The chain runs to 498 residues: MEKYIMSLDQGTTSSRCIIFNKKGEIVSVAQKEFTQIYPKAGWVEHDPLEIWGKQAGVAGEALNIARISPEQIAGIGITNQRETTVVWNKRTGMPVYNAIVWQCRRTAGYCDELREKGIDKTIKEKTGLMLDAYFSATKIKWILDNVEGARELAEKGDLLFGNIDTWLIWNMTKGKIHVTDYTNASRTMLFNIHELKWDEELLEILDIPKSMLPEVKPSSCVYGETDEILFGVSIPIAGDAGDQQAALFGQTCFNAGMAKNTYGTGCFLLMNTGEKAVDSKNGLLTTIAVGIDGKVEYALEGSIFIGGAVIQWLRDELRMVKTAQETEKYATEVEDNNGVYLVPAFVGIGAPYWDSYARGTILGLTRGAKKEHIIRAALESMAYQTHDVLKAMEEDSGIELKALKVDGGACQNNFLMQFQSDILGVEVDRPEVVETTALGAAYLAGLAVGYWKDRNEISQNWAISRSFAPAMEDEKKEKLIKGWHKAVTKAMDWEERE.

Thr-12 is a binding site for ADP. Residues Thr-12, Thr-13, and Ser-14 each coordinate ATP. Thr-12 lines the sn-glycerol 3-phosphate pocket. Arg-16 lines the ADP pocket. 4 residues coordinate sn-glycerol 3-phosphate: Arg-82, Glu-83, Tyr-134, and Asp-243. Residues Arg-82, Glu-83, Tyr-134, Asp-243, and Gln-244 each coordinate glycerol. 2 residues coordinate ADP: Thr-265 and Gly-308. Residues Thr-265, Gly-308, Gln-312, and Gly-409 each contribute to the ATP site. ADP-binding residues include Gly-409 and Asn-413.

The protein belongs to the FGGY kinase family. Homotetramer and homodimer (in equilibrium).

The catalysed reaction is glycerol + ATP = sn-glycerol 3-phosphate + ADP + H(+). Its pathway is polyol metabolism; glycerol degradation via glycerol kinase pathway; sn-glycerol 3-phosphate from glycerol: step 1/1. With respect to regulation, activated by phosphorylation and inhibited by fructose 1,6-bisphosphate (FBP). Its function is as follows. Key enzyme in the regulation of glycerol uptake and metabolism. Catalyzes the phosphorylation of glycerol to yield sn-glycerol 3-phosphate. The protein is Glycerol kinase of Clostridium botulinum (strain ATCC 19397 / Type A).